The following is a 271-amino-acid chain: Type III pantothenate kinase (271 aa).

6–13 (DVRNTNIV) contacts ATP. Residue 109–112 (GADR) participates in substrate binding. Asp111 serves as the catalytic Proton acceptor. Asp131 is a K(+) binding site. An ATP-binding site is contributed by Thr134. Residue Thr186 participates in substrate binding.

The protein belongs to the type III pantothenate kinase family. In terms of assembly, homodimer. It depends on NH4(+) as a cofactor. K(+) serves as cofactor.

The protein resides in the cytoplasm. It carries out the reaction (R)-pantothenate + ATP = (R)-4'-phosphopantothenate + ADP + H(+). Its pathway is cofactor biosynthesis; coenzyme A biosynthesis; CoA from (R)-pantothenate: step 1/5. In terms of biological role, catalyzes the phosphorylation of pantothenate (Pan), the first step in CoA biosynthesis. The protein is Type III pantothenate kinase of Rhodococcus erythropolis (strain PR4 / NBRC 100887).